We begin with the raw amino-acid sequence, 139 residues long: Large ribosomal subunit protein uL16 (139 aa).

The protein belongs to the universal ribosomal protein uL16 family. As to quaternary structure, part of the 50S ribosomal subunit.

In terms of biological role, binds 23S rRNA and is also seen to make contacts with the A and possibly P site tRNAs. The protein is Large ribosomal subunit protein uL16 of Parvibaculum lavamentivorans (strain DS-1 / DSM 13023 / NCIMB 13966).